The chain runs to 222 residues: Transmembrane reductase CYB561D2 (222 aa).

Residues 2 to 17 (ALSAETESHIYRALRT) are Cytoplasmic-facing. Residues 14 to 217 (ALRTASGAAA…NQVSNAYLYR (204 aa)) form the Cytochrome b561 domain. A helical membrane pass occupies residues 18–38 (ASGAAAHLVALGFTIFVAVLA). At 39 to 46 (RPGSSLFS) the chain is on the lumenal side. The chain crosses the membrane as a helical span at residues 47 to 67 (WHPVLMSLAFSFLMTEALLVF). H48 is a binding site for heme b. Topologically, residues 68–85 (SPESSLLHSLSRKGRARC) are cytoplasmic. Residues H86 and H120 each contribute to the heme b site. The helical transmembrane segment at 86–106 (HWVLQLLALLCALLGLGLVIL) threads the bilayer. Residues 107–122 (HKEQLGKAHLVTRHGQ) are Lumenal-facing. Residues 123-143 (AGLLAVLWAGLQCSGGVGLLY) form a helical membrane-spanning segment. Topologically, residues 144–162 (PKLLPRWPLAKLKLYHATS) are cytoplasmic. H159 lines the heme b pocket. The helical transmembrane segment at 163-183 (GLVGYLLGSASLLLGMCSLWF) threads the bilayer. Topologically, residues 184-186 (TAS) are lumenal. Residues 187-207 (VTGAAWYLAVLCPVLTSLVIM) form a helical membrane-spanning segment. Residues 208–222 (NQVSNAYLYRKRIQP) are Cytoplasmic-facing.

Heme b is required as a cofactor.

It localises to the endoplasmic reticulum membrane. The protein resides in the cytoplasmic vesicle membrane. It catalyses the reaction monodehydro-L-ascorbate radical(out) + L-ascorbate(in) = monodehydro-L-ascorbate radical(in) + L-ascorbate(out). The enzyme catalyses Fe(3+)(out) + L-ascorbate(in) = monodehydro-L-ascorbate radical(in) + Fe(2+)(out) + H(+). In terms of biological role, transmembrane reductase that may use ascorbate as an electron donor in the cytoplasm and transfer electrons across endoplasmic reticulum membranes to reduce monodehydro-L-ascorbate radical and iron cations Fe(3+) in the lumen of that compartment. This is Transmembrane reductase CYB561D2 from Homo sapiens (Human).